Reading from the N-terminus, the 147-residue chain is Putative pre-16S rRNA nuclease (147 aa).

Belongs to the YqgF nuclease family.

The protein localises to the cytoplasm. Could be a nuclease involved in processing of the 5'-end of pre-16S rRNA. The chain is Putative pre-16S rRNA nuclease from Polynucleobacter necessarius subsp. necessarius (strain STIR1).